Here is a 277-residue protein sequence, read N- to C-terminus: MNRPHSATGDRPLALVDEHAHAWSPKTARARFRKGLTGPTAGVAAGHTQANLISVPADWAYDMLLFCTRNPQPCPVLDVTDAGSWTTVLADGADLRTDLPRYRVWRDGELVDEPSDVREHWRDDLVTFLIGCSFTFEWALAAAGVPIRHVEQGRNVPMYVTSRACRPAGRLRGPMVVSMRPVPPAHLSAAIHESSLLPAVHGSPVHCGDPSALGIDDLDRPDFGEAVYREPDDIPVFWACGVTPQAAVMASRPPFALTHAPGQMFLTDARDEQYRVA.

Belongs to the D-glutamate cyclase family.

The protein is Putative hydro-lyase SCO1412 of Streptomyces coelicolor (strain ATCC BAA-471 / A3(2) / M145).